Consider the following 519-residue polypeptide: Transmembrane protein 180 (519 aa).

Residues 1 to 11 (MGLDWPQAWLL) are Extracellular-facing. The chain crosses the membrane as a helical span at residues 12 to 43 (GLPIAVVYGSLALFTSILHNVFLLYYVDTFVS). The Cytoplasmic segment spans residues 44–55 (VYKINKVSFWVG). A helical membrane pass occupies residues 56-74 (ETVFLLWNSFNDPLFGWLS). Residues 75–100 (DRQLLSSQPRSGAGLSSRDVVLTRVR) lie on the Extracellular side of the membrane. Residues 101–118 (ALGWHGPLLALSFLAFWV) form a helical membrane-spanning segment. Residues 119–126 (PWAPAGLQ) lie on the Cytoplasmic side of the membrane. Residues 127–151 (FLLCLCLYDGFLTLVDLHHHALLAD) form a helical membrane-spanning segment. Topologically, residues 152–155 (LALS) are extracellular. A helical membrane pass occupies residues 156–179 (SHDRTHLNFYCSLFSAAGSLSVFA). Over 180 to 191 (SYAFWNKEDFSS) the chain is Cytoplasmic. A helical transmembrane segment spans residues 192–223 (FRAFCVVLAAGSGLGFLGTTQLLKRQIEATRR). The Extracellular segment spans residues 224–264 (DRGCPGLDLDGGVCEEEPPVGGEEAGNITLGQYLRQLARHQ). Residue Asn-250 is glycosylated (N-linked (GlcNAc...) asparagine). Residues 265–292 (NFLWFVGMDLVQVFHCHFNSNFFPLFLE) traverse the membrane as a helical segment. Residues 293–305 (HLLSDHISLSTGS) lie on the Cytoplasmic side of the membrane. The chain crosses the membrane as a helical span at residues 306–325 (FLLGISYVAPHLNNLYFLPL). The Extracellular segment spans residues 326 to 330 (CRRWG). A helical transmembrane segment spans residues 331 to 350 (VYAVVRGLFLLKLSLSLLML). The Cytoplasmic segment spans residues 351–358 (LAGPDHPG). A helical membrane pass occupies residues 359-393 (LLCFFIASNRVFTEGTCKLLTLVVTDLVDEDLVLN). Topologically, residues 394-402 (HRKQAASAL) are extracellular. Residues 403-429 (LFGMVALVTKPGQTFAPLLGTWLLCFY) form a helical membrane-spanning segment. Over 430–468 (TGHDLFQQSPMTPVGSVRPWPELPAPAPAPAQAPTLRQG) the chain is Cytoplasmic. A helical membrane pass occupies residues 469–487 (CFYLLVFVPITCALLQLFT). The Extracellular segment spans residues 488 to 519 (WSQFTLHGRRLRTVKAQRQNLAQIHTLNIKMV).

It is found in the cell membrane. The sequence is that of Transmembrane protein 180 from Mus musculus (Mouse).